A 347-amino-acid chain; its full sequence is Phenylalanine--tRNA ligase alpha subunit (347 aa).

A Mg(2+)-binding site is contributed by Glu265.

The protein belongs to the class-II aminoacyl-tRNA synthetase family. Phe-tRNA synthetase alpha subunit type 1 subfamily. As to quaternary structure, tetramer of two alpha and two beta subunits. Mg(2+) serves as cofactor.

The protein resides in the cytoplasm. It carries out the reaction tRNA(Phe) + L-phenylalanine + ATP = L-phenylalanyl-tRNA(Phe) + AMP + diphosphate + H(+). The sequence is that of Phenylalanine--tRNA ligase alpha subunit from Wolbachia sp. subsp. Brugia malayi (strain TRS).